We begin with the raw amino-acid sequence, 625 residues long: tRNA uridine 5-carboxymethylaminomethyl modification enzyme MnmG (625 aa).

14 to 19 (GAGHAG) is an FAD binding site. Residue 273 to 287 (GPRYCPSIEDKIVRF) coordinates NAD(+).

This sequence belongs to the MnmG family. As to quaternary structure, homodimer. Heterotetramer of two MnmE and two MnmG subunits. FAD serves as cofactor.

It localises to the cytoplasm. Its function is as follows. NAD-binding protein involved in the addition of a carboxymethylaminomethyl (cmnm) group at the wobble position (U34) of certain tRNAs, forming tRNA-cmnm(5)s(2)U34. The protein is tRNA uridine 5-carboxymethylaminomethyl modification enzyme MnmG of Clostridium botulinum (strain Okra / Type B1).